The chain runs to 263 residues: Acetylglutamate kinase (263 aa).

Substrate contacts are provided by residues 49-50 (GG), R71, and N163.

This sequence belongs to the acetylglutamate kinase family. ArgB subfamily.

The protein localises to the cytoplasm. It carries out the reaction N-acetyl-L-glutamate + ATP = N-acetyl-L-glutamyl 5-phosphate + ADP. It participates in amino-acid biosynthesis; L-arginine biosynthesis; N(2)-acetyl-L-ornithine from L-glutamate: step 2/4. Functionally, catalyzes the ATP-dependent phosphorylation of N-acetyl-L-glutamate. This Moritella abyssi protein is Acetylglutamate kinase.